The primary structure comprises 341 residues: G2/mitotic-specific cyclin C13-1 (341 aa).

Belongs to the cyclin family. Cyclin AB subfamily.

In terms of biological role, essential for the control of the cell cycle at the G2/M (mitosis) transition. Interacts with the CDC2 and CDK2 protein kinases to form MPF. G2/M cyclins accumulate steadily during G2 and are abruptly destroyed at mitosis. This chain is G2/mitotic-specific cyclin C13-1, found in Daucus carota (Wild carrot).